The primary structure comprises 79 residues: Suppressor of tumorigenicity 20 protein (79 aa).

In terms of tissue distribution, expressed in leukocytes, lung, spleen, liver, heart, kidney, muscle and uterine cervix. Down-regulated in cervical cancer.

In terms of biological role, may act as a tumor suppressor. Promotes apoptosis of cancer cells. The protein is Suppressor of tumorigenicity 20 protein (ST20) of Homo sapiens (Human).